Here is a 488-residue protein sequence, read N- to C-terminus: GTPase Der (488 aa).

Residues 3–166 (PVVALVGRPN…YALAPYAEAL (164 aa)) form the EngA-type G 1 domain. Residues 9–16 (GRPNVGKS), 56–60 (DTGGI), and 118–121 (NKVD) each bind GTP. Positions 168 to 191 (LNRDGDEDEDEEEREYSEEEAEAE) are disordered. A compositionally biased stretch (acidic residues) spans 172-189 (GDEDEDEEEREYSEEEAE). The EngA-type G 2 domain maps to 200 to 373 (IKMAIIGKPN…SVQEAYDSAT (174 aa)). GTP-binding positions include 206-213 (GKPNVGKS), 253-257 (DTAGV), and 318-321 (NKWD). In terms of domain architecture, KH-like spans 374 to 458 (RRVSTSMLTR…PIQIRFQDSA (85 aa)).

It belongs to the TRAFAC class TrmE-Era-EngA-EngB-Septin-like GTPase superfamily. EngA (Der) GTPase family. As to quaternary structure, associates with the 50S ribosomal subunit.

Its function is as follows. GTPase that plays an essential role in the late steps of ribosome biogenesis. This Shewanella sediminis (strain HAW-EB3) protein is GTPase Der.